The sequence spans 121 residues: Small ribosomal subunit protein uS12 (121 aa).

A disordered region spans residues 1-25 (MPTINQLVRKNRKQKKSQSKSPVLE). A compositionally biased stretch (basic residues) spans 9 to 18 (RKNRKQKKSQ). At aspartate 89 the chain carries 3-methylthioaspartic acid.

This sequence belongs to the universal ribosomal protein uS12 family. In terms of assembly, part of the 30S ribosomal subunit. Contacts proteins S8 and S17. May interact with IF1 in the 30S initiation complex.

In terms of biological role, with S4 and S5 plays an important role in translational accuracy. Interacts with and stabilizes bases of the 16S rRNA that are involved in tRNA selection in the A site and with the mRNA backbone. Located at the interface of the 30S and 50S subunits, it traverses the body of the 30S subunit contacting proteins on the other side and probably holding the rRNA structure together. The combined cluster of proteins S8, S12 and S17 appears to hold together the shoulder and platform of the 30S subunit. This Rhodopirellula baltica (strain DSM 10527 / NCIMB 13988 / SH1) protein is Small ribosomal subunit protein uS12.